Here is a 76-residue protein sequence, read N- to C-terminus: MTKETQSFEEMMQELEQIVQKLDNETVSLEESLDLYQRGMKLSAACDTTLKNAEKKVNDLIKEEAEDVKNDESTDE.

It belongs to the XseB family. As to quaternary structure, heterooligomer composed of large and small subunits.

It localises to the cytoplasm. It catalyses the reaction Exonucleolytic cleavage in either 5'- to 3'- or 3'- to 5'-direction to yield nucleoside 5'-phosphates.. Its function is as follows. Bidirectionally degrades single-stranded DNA into large acid-insoluble oligonucleotides, which are then degraded further into small acid-soluble oligonucleotides. The protein is Exodeoxyribonuclease 7 small subunit of Staphylococcus aureus (strain Mu3 / ATCC 700698).